A 383-amino-acid polypeptide reads, in one-letter code: 8-amino-7-oxononanoate synthase (383 aa).

Arg21 contributes to the substrate binding site. 108-109 (GY) is a pyridoxal 5'-phosphate binding site. Substrate is bound at residue His133. The pyridoxal 5'-phosphate site is built by Ser179, His207, and Thr233. Lys236 is subject to N6-(pyridoxal phosphate)lysine. Residue Thr350 coordinates substrate.

The protein belongs to the class-II pyridoxal-phosphate-dependent aminotransferase family. BioF subfamily. As to quaternary structure, homodimer. Pyridoxal 5'-phosphate is required as a cofactor.

It carries out the reaction 6-carboxyhexanoyl-[ACP] + L-alanine + H(+) = (8S)-8-amino-7-oxononanoate + holo-[ACP] + CO2. It functions in the pathway cofactor biosynthesis; biotin biosynthesis. Catalyzes the decarboxylative condensation of pimeloyl-[acyl-carrier protein] and L-alanine to produce 8-amino-7-oxononanoate (AON), [acyl-carrier protein], and carbon dioxide. This chain is 8-amino-7-oxononanoate synthase, found in Yersinia pseudotuberculosis serotype O:1b (strain IP 31758).